We begin with the raw amino-acid sequence, 538 residues long: Bifunctional purine biosynthesis protein PurH (538 aa).

The 151-residue stretch at 8–158 (IPAPDKVEIK…KNHAYVTILT (151 aa)) folds into the MGS-like domain.

It belongs to the PurH family.

It carries out the reaction (6R)-10-formyltetrahydrofolate + 5-amino-1-(5-phospho-beta-D-ribosyl)imidazole-4-carboxamide = 5-formamido-1-(5-phospho-D-ribosyl)imidazole-4-carboxamide + (6S)-5,6,7,8-tetrahydrofolate. The catalysed reaction is IMP + H2O = 5-formamido-1-(5-phospho-D-ribosyl)imidazole-4-carboxamide. Its pathway is purine metabolism; IMP biosynthesis via de novo pathway; 5-formamido-1-(5-phospho-D-ribosyl)imidazole-4-carboxamide from 5-amino-1-(5-phospho-D-ribosyl)imidazole-4-carboxamide (10-formyl THF route): step 1/1. The protein operates within purine metabolism; IMP biosynthesis via de novo pathway; IMP from 5-formamido-1-(5-phospho-D-ribosyl)imidazole-4-carboxamide: step 1/1. The chain is Bifunctional purine biosynthesis protein PurH from Rhizobium etli (strain ATCC 51251 / DSM 11541 / JCM 21823 / NBRC 15573 / CFN 42).